A 357-amino-acid chain; its full sequence is Homoserine kinase (357 aa).

This sequence belongs to the GHMP kinase family. Homoserine kinase subfamily.

The catalysed reaction is L-homoserine + ATP = O-phospho-L-homoserine + ADP + H(+). Its pathway is amino-acid biosynthesis; L-threonine biosynthesis; L-threonine from L-aspartate: step 4/5. Functionally, commits homoserine to the threonine biosynthesis pathway by catalyzing its O-phosphorylation. This Cryptococcus neoformans var. grubii serotype A (strain H99 / ATCC 208821 / CBS 10515 / FGSC 9487) (Filobasidiella neoformans var. grubii) protein is Homoserine kinase.